The primary structure comprises 196 residues: Nucleotide kinase gp1.7 (196 aa).

Positions 97 to 118 (PRKPHLNKPEVTPTDDQPSAET) are disordered.

Dodecamer.

The catalysed reaction is dGMP + ATP = dGDP + ADP. It carries out the reaction dTMP + ATP = dTDP + ADP. Functionally, nucleotide kinase that catalyzes the phosphorylation of dGMP and dTMP to dGDP and dTDP. A double mutation in this protein and the RecBCD inhibitor gp5.9 protein allow phage to overcome the retron Ec48 bacteriophage defense system. This protein alone when overexpressed in E.coli does not cause growth arrest; Y128C may be a silent mutation. The protein is Nucleotide kinase gp1.7 of Escherichia coli (Bacteriophage T7).